The following is a 224-amino-acid chain: Protein DCL, chloroplastic (224 aa).

Residues 1–50 constitute a chloroplast transit peptide; that stretch reads MASICTSNFHFLCRKNNSSPISHHLLLSPSSLSFSRCGGLRLCRCAAVKT. Residues 76-98 are disordered; the sequence is TTSESEELVKEESDDEVGKKSGD. Basic and acidic residues predominate over residues 82–98; sequence ELVKEESDDEVGKKSGD.

It localises to the plastid. The protein resides in the chloroplast. Functionally, has a function in the early stage of chloroplast development and palisade cell morphogenesis. Required for correct plastid ribosome assembly. Required for processing and maturation of 4.5S rRNA. The polypeptide is Protein DCL, chloroplastic (DCL) (Solanum lycopersicum (Tomato)).